A 271-amino-acid chain; its full sequence is Delta(7)-sterol-C5(6)-desaturase (271 aa).

Helical transmembrane passes span 44-64 and 120-140; these read IGGV…IYHL and VGWL…EFGI. The Fatty acid hydroxylase domain occupies 130–259; the sequence is AIYLVIVEFG…TIWMDWMFGT (130 aa). Residues 144 to 148 carry the Histidine box-1 motif; sequence HMELH. A Histidine box-2 motif is present at residues 158–162; sequence HATHH. A helical membrane pass occupies residues 190 to 210; sequence HVVALLLVPMHFSTHIALIFL. The short motif at 235–239 is the Histidine box-3 element; that stretch reads HTIHH.

Belongs to the sterol desaturase family. It depends on Fe cation as a cofactor.

Its subcellular location is the endoplasmic reticulum membrane. The enzyme catalyses a Delta(7)-sterol + 2 Fe(II)-[cytochrome b5] + O2 + 2 H(+) = a Delta(5),Delta(7)-sterol + 2 Fe(III)-[cytochrome b5] + 2 H2O. Involved in the biosynthesis of sitosterol and campesterol. The polypeptide is Delta(7)-sterol-C5(6)-desaturase (Nicotiana tabacum (Common tobacco)).